The sequence spans 129 residues: Small ribosomal subunit protein uS11c (129 aa).

It belongs to the universal ribosomal protein uS11 family. Part of the 30S ribosomal subunit.

The protein resides in the plastid. Its subcellular location is the chloroplast. In Cyanidium caldarium (Red alga), this protein is Small ribosomal subunit protein uS11c.